The following is a 313-amino-acid chain: Aspartate carbamoyltransferase catalytic subunit (313 aa).

Residues R51 and T52 each contribute to the carbamoyl phosphate site. K80 is a binding site for L-aspartate. Carbamoyl phosphate contacts are provided by R101, H129, and Q132. Residues R162 and R224 each coordinate L-aspartate. Carbamoyl phosphate is bound by residues L263 and P264.

The protein belongs to the aspartate/ornithine carbamoyltransferase superfamily. ATCase family. Heterododecamer (2C3:3R2) of six catalytic PyrB chains organized as two trimers (C3), and six regulatory PyrI chains organized as three dimers (R2).

The catalysed reaction is carbamoyl phosphate + L-aspartate = N-carbamoyl-L-aspartate + phosphate + H(+). It participates in pyrimidine metabolism; UMP biosynthesis via de novo pathway; (S)-dihydroorotate from bicarbonate: step 2/3. Functionally, catalyzes the condensation of carbamoyl phosphate and aspartate to form carbamoyl aspartate and inorganic phosphate, the committed step in the de novo pyrimidine nucleotide biosynthesis pathway. The chain is Aspartate carbamoyltransferase catalytic subunit from Phocaeicola vulgatus (strain ATCC 8482 / DSM 1447 / JCM 5826 / CCUG 4940 / NBRC 14291 / NCTC 11154) (Bacteroides vulgatus).